A 539-amino-acid polypeptide reads, in one-letter code: MATSAPLRSLEEEVTCSICLDYLRDPVTIDCGHVFCRSCTTDVRPISGSRPVCPLCKKPFKKENIRPVWQLASLVENIERLKVDKGRQPGEVTREQQDAKLCERHREKLHYYCEDDGKLLCVMCRESREHRPHTAVLMEKAAQPHREKILNHLSTLRRDRDKIQGFQAKGEADILAALKKLQDQRQYIVAEFEQGHQFLREREEHLLEQLAKLEQELTEGREKFKSRGVGELARLALVISELEGKAQQPAAELMQDTRDFLNRYPRKKFWVGKPIARVVKKKTGEFSDKLLSLQRGLREFQGKLLRDLEYKTVSVTLDPQSASGYLQLSEDWKCVTYTSLYKSAYLHPQQFDCEPGVLGSKGFTWGKVYWEVEVEREGWSEDEEEGDEEEEGEEEEEEEEAGYGDGYDDWETDEDEESLGDEEEEEEEEEEEVLESCMVGVARDSMKRKGDLSLRPEDGVWALRLSSSGIWANTSPEAELFPALRPRRVGIALDYEGGTVTFTNAESQELIYTFTATFTRRLVPFLWLKWPGTRLLLRP.

Residues 16–57 (CSICLDYLRDPVTIDCGHVFCRSCTTDVRPISGSRPVCPLCK) form an RING-type zinc finger. A B box-type zinc finger spans residues 97–138 (QDAKLCERHREKLHYYCEDDGKLLCVMCRESREHRPHTAVLM). Zn(2+)-binding residues include Cys102, His105, Cys124, and His130. A coiled-coil region spans residues 188–227 (IVAEFEQGHQFLREREEHLLEQLAKLEQELTEGREKFKSR). The 245-residue stretch at 295–539 (RGLREFQGKL…WPGTRLLLRP (245 aa)) folds into the B30.2/SPRY domain. The disordered stretch occupies residues 376 to 437 (REGWSEDEEE…EEEEEVLESC (62 aa)). Over residues 380–434 (SEDEEEGDEEEEGEEEEEEEEAGYGDGYDDWETDEDEESLGDEEEEEEEEEEEVL) the composition is skewed to acidic residues.

It belongs to the TRIM/RBCC family. As to quaternary structure, interacts with TBK1; this interaction bridges together TBK1 and NEMO in order to activate TBK1. Interacts with INCA1. Post-translationally, autoubiquitinates upon viral infection. In turn, autoubiquitinated TRIM26 recruits NEMO and bridges TBK1-NEMO interaction.

The protein resides in the cytoplasm. The protein localises to the nucleus. It carries out the reaction S-ubiquitinyl-[E2 ubiquitin-conjugating enzyme]-L-cysteine + [acceptor protein]-L-lysine = [E2 ubiquitin-conjugating enzyme]-L-cysteine + N(6)-ubiquitinyl-[acceptor protein]-L-lysine.. In terms of biological role, E3 ubiquitin-protein ligase which regulates the IFN-beta production and antiviral response downstream of various DNA-encoded pattern-recognition receptors (PRRs). Also plays a central role in determining the response to different forms of oxidative stress by controlling levels of DNA glycosylases NEIL1, NEIL3 and NTH1 that are involved in repair of damaged DNA. Promotes nuclear IRF3 ubiquitination and proteasomal degradation. Bridges together TBK1 and NEMO during the innate response to viral infection leading to the activation of TBK1. Positively regulates LPS-mediated inflammatory innate immune response by catalyzing the 'Lys-11'-linked polyubiquitination of TAB1 to enhance its activation and subsequent NF-kappa-B and MAPK signaling. In a manner independent of its catalytic activity, inhibits WWP2, a SOX2-directed E3 ubiquitin ligase, and thus protects SOX2 from polyubiquitination and proteasomal degradation. Ubiquitinates the histone acetyltransferase protein complex component PHF20 and thereby triggers its degradation in the nucleus after its recruitment by the histone demethylase KDM6B, serving as a scaffold protein. Upon induction by TGF-beta, ubiquitinates the TFIID component TAF7 for proteasomal degradation. Induces ferroptosis by ubiquitinating SLC7A11, a critical protein for lipid reactive oxygen species (ROS) scavenging. The chain is Tripartite motif-containing protein 26 (TRIM26) from Pan troglodytes (Chimpanzee).